Consider the following 250-residue polypeptide: Ribosomal RNA small subunit methyltransferase J (250 aa).

S-adenosyl-L-methionine-binding positions include 102 to 103 (RD), 118 to 119 (ER), 154 to 155 (SS), and Asp-172.

It belongs to the methyltransferase superfamily. RsmJ family.

It localises to the cytoplasm. The catalysed reaction is guanosine(1516) in 16S rRNA + S-adenosyl-L-methionine = N(2)-methylguanosine(1516) in 16S rRNA + S-adenosyl-L-homocysteine + H(+). Specifically methylates the guanosine in position 1516 of 16S rRNA. The polypeptide is Ribosomal RNA small subunit methyltransferase J (Edwardsiella ictaluri (strain 93-146)).